The chain runs to 442 residues: Threonine/serine transporter TdcC (442 aa).

Transmembrane regions (helical) follow at residues 21–41, 44–64, 96–116, 139–159, 162–182, 206–226, 258–278, 312–332, 364–384, 388–408, and 422–442; these read TTWT…FFPI, GFGG…IAFL, GVVI…IYGV, VVAL…KDLM, VMSF…LSLI, ILVT…FSPI, ASIL…FTLS, ITLE…SFFG, LISM…NPNI, IEAM…MYAI, and ENYF…YKLL.

This sequence belongs to the amino acid/polyamine transporter 2 family. SdaC/TdcC subfamily.

It localises to the cell inner membrane. It catalyses the reaction L-threonine(in) + H(+)(in) = L-threonine(out) + H(+)(out). The enzyme catalyses L-serine(in) + H(+)(in) = L-serine(out) + H(+)(out). Its function is as follows. Involved in the import of threonine and serine into the cell, with the concomitant import of a proton (symport system). The sequence is that of Threonine/serine transporter TdcC from Yersinia enterocolitica serotype O:8 / biotype 1B (strain NCTC 13174 / 8081).